The following is a 1042-amino-acid chain: MDSNNSKKGSSVKSPCQTPRSTEKSNRDFRVDSNSNSNPVSKNEKEKGVNIQVIVRCRPFNSEETRLQTPAVLTCNDRKKEVAVAQNIAGKQIDKTFLFDKVFGPTSQQKDLYHQAVSPIVFEVLDGYNCTIFAYGQTGTGKTYTMEGGARKKNGEIPSDAGVIPRAVKQIFDILEAQSAAEYSLKVSFLELYNEELTDLLAPEETKFADDKSKKPLALMEDGKGGVFVRGLEEEIVSTADEIYKVLEKGSAKRRTAETLLNKQSSRSHSIFSVTIHIKECTPEGEEIVKSGKLNLVDLAGSENISRSGAREGRAREAGEINKSLLTLGRVINALVEHSGHIPYRESKLTRLLRDSLGGKTKTCVIATVSPSVHCLEETLSTLDYAHRAKHIKNKPEVNQKMMKSAIMKDLYSEIERLKQEVYAAREKNGIYIPKERYTQEEAEKKAMADKIEQMEVEGEAKDKQIIDLQELYNSEQLVTAGLREKLDKTEKKLYETEQALLDLEEKHRQAVATIKEKEYLISNLLKSEKTLVDRAVELQAELANAASDVSNLFAKIGRKDKIEDSNRSLIQDFQSQLLRQLELLNNSVAGSVSQQEKQLQDMENVMVSFVSAKTKATETLRGSLAQLKEKYNTGIKSLDDIAGNLDKDSQSTLNDLNSEVTKHSCALEDMFKGFTSEAYTLLEGLQGSLHNQEEKLSAFTQQQRDLHSRSMDSAKSVSTVMLDFFKTLDTHANKLTKLAEDAQNVNEQKLSAFTKKFEESIANEEKQMLEKVAELLASSNARKKELVQIAVQDIRQGSSSQTGALQQEMSAMQDSASSIKVQWNSHIVQAESHHLDNISAVEVAKEDMQKMHLKCLENSKTGTQQWKTAQESLVDLEKRNVATADSIIRGAIENNEKLRTQFSSAVSTTLSDVDSSNREIISSIDNSLQLDKDASTDVNSTIVPCSENLKELRTHHDDNVVEIKQNTGKCLGHEYKVDEATSSTPRKREYNIPTVGSIEELKTPSFEELLKAFHDCKSPKQMQNGEAKHVSNGRPPLTAIN.

Residues 1 to 14 show a composition bias toward low complexity; sequence MDSNNSKKGSSVKS. Residues 1 to 45 are disordered; sequence MDSNNSKKGSSVKSPCQTPRSTEKSNRDFRVDSNSNSNPVSKNEK. Residues 21–31 are compositionally biased toward basic and acidic residues; that stretch reads STEKSNRDFRV. Polar residues predominate over residues 32-41; it reads DSNSNSNPVS. Positions 50 to 392 constitute a Kinesin motor domain; it reads NIQVIVRCRP…LDYAHRAKHI (343 aa). Residue 136–143 coordinates ATP; the sequence is GQTGTGKT. Residues 480-517 adopt a coiled-coil conformation; that stretch reads TAGLREKLDKTEKKLYETEQALLDLEEKHRQAVATIKE. The tract at residues 1021 to 1042 is disordered; that stretch reads KQMQNGEAKHVSNGRPPLTAIN.

Belongs to the TRAFAC class myosin-kinesin ATPase superfamily. Kinesin family. KIN-5/BimC subfamily.

The protein resides in the cytoplasm. The protein localises to the cytoskeleton. Its subcellular location is the spindle. Functionally, responsible for microtubule translocation. May be important for the organization of phragmoplast-specific arrays of microtubules. Plays an essential role in stabilizing the mitotic spindle. Required during mitotic cytokinesis. The sequence is that of Kinesin-like protein KIN-5A from Arabidopsis thaliana (Mouse-ear cress).